The primary structure comprises 208 residues: 2-phospho-L-lactate guanylyltransferase (208 aa).

Belongs to the CofC family. Homodimer.

The catalysed reaction is (2S)-2-phospholactate + GTP + H(+) = (2S)-lactyl-2-diphospho-5'-guanosine + diphosphate. It participates in cofactor biosynthesis; coenzyme F420 biosynthesis. Guanylyltransferase that catalyzes the activation of (2S)-2-phospholactate (2-PL) as (2S)-lactyl-2-diphospho-5'-guanosine, via the condensation of 2-PL with GTP. It is involved in the biosynthesis of coenzyme F420, a hydride carrier cofactor. The polypeptide is 2-phospho-L-lactate guanylyltransferase (Methanosarcina mazei (strain ATCC BAA-159 / DSM 3647 / Goe1 / Go1 / JCM 11833 / OCM 88) (Methanosarcina frisia)).